The primary structure comprises 404 residues: Methyltransferase-like protein 22 (404 aa).

Disordered regions lie at residues 60-102 and 115-145; these read TDSG…SLQA and QLDE…DKVH. Residues 68–78 are compositionally biased toward basic and acidic residues; that stretch reads SHRDVHTKEPP. Positions 79–88 are enriched in low complexity; that stretch reads SAETGSTGSP. Position 132 is a phosphoserine (Ser-132).

This sequence belongs to the methyltransferase superfamily. METTL22 family. Interacts with members of the heat shock protein 90 and 70 families; these proteins probably are methylation substrates.

The protein resides in the nucleus. It carries out the reaction L-lysyl-[protein] + 3 S-adenosyl-L-methionine = N(6),N(6),N(6)-trimethyl-L-lysyl-[protein] + 3 S-adenosyl-L-homocysteine + 3 H(+). In terms of biological role, protein N-lysine methyltransferase. Trimethylates KIN at Lys-135 (in vitro). In Homo sapiens (Human), this protein is Methyltransferase-like protein 22 (METTL22).